A 170-amino-acid chain; its full sequence is Protein-export protein SecB (170 aa).

It belongs to the SecB family. As to quaternary structure, homotetramer, a dimer of dimers. One homotetramer interacts with 1 SecA dimer.

The protein localises to the cytoplasm. In terms of biological role, one of the proteins required for the normal export of preproteins out of the cell cytoplasm. It is a molecular chaperone that binds to a subset of precursor proteins, maintaining them in a translocation-competent state. It also specifically binds to its receptor SecA. In Pasteurella multocida (strain Pm70), this protein is Protein-export protein SecB.